A 254-amino-acid polypeptide reads, in one-letter code: Phosphoribosylaminoimidazole-succinocarboxamide synthase (254 aa).

Belongs to the SAICAR synthetase family.

The enzyme catalyses 5-amino-1-(5-phospho-D-ribosyl)imidazole-4-carboxylate + L-aspartate + ATP = (2S)-2-[5-amino-1-(5-phospho-beta-D-ribosyl)imidazole-4-carboxamido]succinate + ADP + phosphate + 2 H(+). The protein operates within purine metabolism; IMP biosynthesis via de novo pathway; 5-amino-1-(5-phospho-D-ribosyl)imidazole-4-carboxamide from 5-amino-1-(5-phospho-D-ribosyl)imidazole-4-carboxylate: step 1/2. The chain is Phosphoribosylaminoimidazole-succinocarboxamide synthase from Gluconacetobacter diazotrophicus (strain ATCC 49037 / DSM 5601 / CCUG 37298 / CIP 103539 / LMG 7603 / PAl5).